Reading from the N-terminus, the 591-residue chain is Aspartate--tRNA(Asp/Asn) ligase (591 aa).

An L-aspartate-binding site is contributed by Glu176. The tract at residues 200–203 is aspartate; sequence QLFK. Arg222 contacts L-aspartate. ATP contacts are provided by residues 222-224 and Gln231; that span reads RDE. Residue His450 coordinates L-aspartate. Glu484 serves as a coordination point for ATP. Arg491 is an L-aspartate binding site. 536 to 539 lines the ATP pocket; sequence GLDR.

This sequence belongs to the class-II aminoacyl-tRNA synthetase family. Type 1 subfamily. Homodimer.

Its subcellular location is the cytoplasm. The enzyme catalyses tRNA(Asx) + L-aspartate + ATP = L-aspartyl-tRNA(Asx) + AMP + diphosphate. Its function is as follows. Aspartyl-tRNA synthetase with relaxed tRNA specificity since it is able to aspartylate not only its cognate tRNA(Asp) but also tRNA(Asn). Reaction proceeds in two steps: L-aspartate is first activated by ATP to form Asp-AMP and then transferred to the acceptor end of tRNA(Asp/Asn). The sequence is that of Aspartate--tRNA(Asp/Asn) ligase from Bacillus cereus (strain G9842).